A 626-amino-acid chain; its full sequence is Basic helix-loop-helix ARNT-like protein 1 (626 aa).

The disordered stretch occupies residues 1–58 (MADQRMDISSTISDFMSPGPTDLLSGSLSTSGVDCNRKRKGSATDYQESMDTDKDDPH). Ser17 carries the post-translational modification Phosphoserine; by GSK3-beta. Over residues 17-32 (SPGPTDLLSGSLSTSG) the composition is skewed to low complexity. Thr21 carries the phosphothreonine; by GSK3-beta modification. Positions 36-41 (NRKRKG) match the Nuclear localization signal motif. The bHLH domain maps to 72-125 (NAREAHSQIEKRRRDKMNSFIDELASLVPTCNAMSRKLDKLTVLRMAVQHMKTL). The residue at position 78 (Ser78) is a Phosphoserine. Ser90 bears the Phosphoserine; by CK2 mark. The Nuclear export signal 1 signature appears at 142–152 (LSDDELKHLIL). The 73-residue stretch at 143-215 (SDDELKHLIL…EQLSSSDTAP (73 aa)) folds into the PAS 1 domain. Lys252 participates in a covalent cross-link: Glycyl lysine isopeptide (Lys-Gly) (interchain with G-Cter in SUMO2 and SUMO3). A Glycyl lysine isopeptide (Lys-Gly) (interchain with G-Cter in SUMO); alternate cross-link involves residue Lys259. A Glycyl lysine isopeptide (Lys-Gly) (interchain with G-Cter in SUMO2); alternate cross-link involves residue Lys259. In terms of domain architecture, PAS 2 spans 326–396 (PQPVNGEIRV…ECHRQVLQTR (71 aa)). The Nuclear export signal 2 signature appears at 361–369 (LAYLPQELL). The 44-residue stretch at 401–444 (TNCYKFKIKDGSFITLRSRWFSFMNPWTKEVEYIVSTNTVVLAN) folds into the PAC domain. Disordered stretches follow at residues 459 to 492 (SPHS…RAGA) and 511 to 595 (GSSP…SPSN). An interaction with CIART region spans residues 508–588 (RIRGSSPSSC…IGIDMIDNDQ (81 aa)). Residues 511–521 (GSSPSSCGSSP) are compositionally biased toward low complexity. Residue Lys538 is modified to N6-acetyllysine.

As to quaternary structure, component of the circadian clock oscillator which includes the CRY1/2 proteins, CLOCK or NPAS2, BMAL1 or BMAL2, CSNK1D and/or CSNK1E, TIMELESS and the PER1/2/3 proteins. Forms a heterodimer with CLOCK. The CLOCK-BMAL1 heterodimer is required for E-box-dependent transactivation, for CLOCK nuclear translocation and degradation, and, for phosphorylation of both CLOCK and BMAL1. Part of a nuclear complex which also includes RACK1 and PRKCA; RACK1 and PRKCA are recruited to the complex in a circadian manner. Interacts with NPAS2. Interacts with EZH2. Interacts with SUMO3. Interacts with SIRT1. Interacts with AHR. Interacts with ID1, ID2 and ID3. Interacts with DDX4. Interacts with OGT. Interacts with EED and SUZ12. Interacts with MTA1. Interacts with CIART. Interacts with HSP90. Interacts with KAT2B and EP300. Interacts with BHLHE40/DEC1 and BHLHE41/DEC2. Interacts with RELB and the interaction is enhanced in the presence of CLOCK. Interacts with PER1, PER2, CRY1 and CRY2 and this interaction requires a translocation to the nucleus. Interaction of the CLOCK-BMAL1 heterodimer with PER or CRY inhibits transcription activation. Interaction of the CLOCK-BMAL1 with CRY1 is independent of DNA but with PER2 is off DNA. The CLOCK-BMAL1 heterodimer interacts with GSK3B. Interacts with KDM5A. Interacts with KMT2A; in a circadian manner. Interacts with UBE3A. Interacts with PRKCG. Interacts with MAGEL2. Interacts with NCOA2. Interacts with THRAP3. The CLOCK-BMAL1 heterodimer interacts with PASD1. Interacts with PASD1. Interacts with USP9X. Interacts with PIWIL2 (via PIWI domain). Interacts with HDAC3. Interacts with HNF4A. Ubiquitinated, leading to its proteasomal degradation. Deubiquitinated by USP9X. Post-translationally, O-glycosylated; contains O-GlcNAc. O-glycosylation by OGT prevents protein degradation by inhibiting ubiquitination. It also stabilizes the CLOCK-BMAL1 heterodimer thereby increasing CLOCK-BMAL1-mediated transcription of genes in the negative loop of the circadian clock such as PER1/2/3 and CRY1/2. In terms of processing, acetylated on Lys-538 by CLOCK during the repression phase of the circadian cycle. Acetylation facilitates recruitment of CRY1 protein and initiates the repression phase of the circadian cycle. Acetylated at Lys-538 by KAT5 during the activation phase of the cycle, leading to recruitment of the positive transcription elongation factor b (P-TEFb) and BRD4, followed by productive elongation of circadian transcripts. Deacetylated by SIRT1, which may result in decreased protein stability. Phosphorylated upon dimerization with CLOCK. Phosphorylation enhances the transcriptional activity, alters the subcellular localization and decreases the stability of the CLOCK-BMAL1 heterodimer by promoting its degradation. Phosphorylation shows circadian variations in the liver with a peak between CT10 to CT14. Phosphorylation at Ser-90 by CK2 is essential for its nuclear localization, its interaction with CLOCK and controls CLOCK nuclear entry. Dephosphorylation at Ser-78 is important for dimerization with CLOCK and transcriptional activity. Post-translationally, sumoylated on Lys-259 upon dimerization with CLOCK. Predominantly conjugated to poly-SUMO2/3 rather than SUMO1 and the level of these conjugates undergo rhythmic variation, peaking at CT9-CT12. Sumoylation localizes it exclusively to the PML body and promotes its ubiquitination in the PML body, ubiquitin-dependent proteasomal degradation and the transcriptional activity of the CLOCK-BMAL1 heterodimer. In terms of processing, undergoes lysosome-mediated degradation in a time-dependent manner in the liver.

The protein resides in the nucleus. Its subcellular location is the cytoplasm. It is found in the PML body. Transcriptional activator which forms a core component of the circadian clock. The circadian clock, an internal time-keeping system, regulates various physiological processes through the generation of approximately 24 hour circadian rhythms in gene expression, which are translated into rhythms in metabolism and behavior. It is derived from the Latin roots 'circa' (about) and 'diem' (day) and acts as an important regulator of a wide array of physiological functions including metabolism, sleep, body temperature, blood pressure, endocrine, immune, cardiovascular, and renal function. Consists of two major components: the central clock, residing in the suprachiasmatic nucleus (SCN) of the brain, and the peripheral clocks that are present in nearly every tissue and organ system. Both the central and peripheral clocks can be reset by environmental cues, also known as Zeitgebers (German for 'timegivers'). The predominant Zeitgeber for the central clock is light, which is sensed by retina and signals directly to the SCN. The central clock entrains the peripheral clocks through neuronal and hormonal signals, body temperature and feeding-related cues, aligning all clocks with the external light/dark cycle. Circadian rhythms allow an organism to achieve temporal homeostasis with its environment at the molecular level by regulating gene expression to create a peak of protein expression once every 24 hours to control when a particular physiological process is most active with respect to the solar day. Transcription and translation of core clock components (CLOCK, NPAS2, BMAL1, BMAL2, PER1, PER2, PER3, CRY1 and CRY2) plays a critical role in rhythm generation, whereas delays imposed by post-translational modifications (PTMs) are important for determining the period (tau) of the rhythms (tau refers to the period of a rhythm and is the length, in time, of one complete cycle). A diurnal rhythm is synchronized with the day/night cycle, while the ultradian and infradian rhythms have a period shorter and longer than 24 hours, respectively. Disruptions in the circadian rhythms contribute to the pathology of cardiovascular diseases, cancer, metabolic syndromes and aging. A transcription/translation feedback loop (TTFL) forms the core of the molecular circadian clock mechanism. Transcription factors, CLOCK or NPAS2 and BMAL1 or BMAL2, form the positive limb of the feedback loop, act in the form of a heterodimer and activate the transcription of core clock genes and clock-controlled genes (involved in key metabolic processes), harboring E-box elements (5'-CACGTG-3') within their promoters. The core clock genes: PER1/2/3 and CRY1/2 which are transcriptional repressors form the negative limb of the feedback loop and interact with the CLOCK|NPAS2-BMAL1|BMAL2 heterodimer inhibiting its activity and thereby negatively regulating their own expression. This heterodimer also activates nuclear receptors NR1D1/2 and RORA/B/G, which form a second feedback loop and which activate and repress BMAL1 transcription, respectively. BMAL1 positively regulates myogenesis and negatively regulates adipogenesis via the transcriptional control of the genes of the canonical Wnt signaling pathway. Plays a role in normal pancreatic beta-cell function; regulates glucose-stimulated insulin secretion via the regulation of antioxidant genes NFE2L2/NRF2 and its targets SESN2, PRDX3, CCLC and CCLM. Negatively regulates the mTORC1 signaling pathway; regulates the expression of MTOR and DEPTOR. Controls diurnal oscillations of Ly6C inflammatory monocytes; rhythmic recruitment of the PRC2 complex imparts diurnal variation to chemokine expression that is necessary to sustain Ly6C monocyte rhythms. Regulates the expression of HSD3B2, STAR, PTGS2, CYP11A1, CYP19A1 and LHCGR in the ovary and also the genes involved in hair growth. Plays an important role in adult hippocampal neurogenesis by regulating the timely entry of neural stem/progenitor cells (NSPCs) into the cell cycle and the number of cell divisions that take place prior to cell-cycle exit. Regulates the circadian expression of CIART and KLF11. The CLOCK-BMAL1 heterodimer regulates the circadian expression of SERPINE1/PAI1, VWF, B3, CCRN4L/NOC, NAMPT, DBP, MYOD1, PPARGC1A, PPARGC1B, SIRT1, GYS2, F7, NGFR, GNRHR, BHLHE40/DEC1, ATF4, MTA1, KLF10 and also genes implicated in glucose and lipid metabolism. Promotes rhythmic chromatin opening, regulating the DNA accessibility of other transcription factors. May play a role in spermatogenesis; contributes to the chromatoid body assembly and physiology. The NPAS2-BMAL1 heterodimer positively regulates the expression of MAOA, F7 and LDHA and modulates the circadian rhythm of daytime contrast sensitivity by regulating the rhythmic expression of adenylate cyclase type 1 (ADCY1) in the retina. The preferred binding motif for the CLOCK-BMAL1 heterodimer is 5'-CACGTGA-3', which contains a flanking adenine nucleotide at the 3-prime end of the canonical 6-nucleotide E-box sequence. CLOCK specifically binds to the half-site 5'-CAC-3', while BMAL1 binds to the half-site 5'-GTGA-3'. The CLOCK-BMAL1 heterodimer also recognizes the non-canonical E-box motifs 5'-AACGTGA-3' and 5'-CATGTGA-3'. Essential for the rhythmic interaction of CLOCK with ASS1 and plays a critical role in positively regulating CLOCK-mediated acetylation of ASS1. Plays a role in protecting against lethal sepsis by limiting the expression of immune checkpoint protein CD274 in macrophages in a PKM2-dependent manner. Regulates the diurnal rhythms of skeletal muscle metabolism via transcriptional activation of genes promoting triglyceride synthesis (DGAT2) and metabolic efficiency (COQ10B). This chain is Basic helix-loop-helix ARNT-like protein 1, found in Rattus norvegicus (Rat).